A 258-amino-acid polypeptide reads, in one-letter code: Homeobox protein VENTX (258 aa).

Positions 1 to 32 are enriched in polar residues; sequence MRLSSSPPRGPQQLSSFGSVDWLSQSSCSGPT. 2 disordered regions span residues 1 to 93 and 227 to 248; these read MRLS…RAPR and SHPP…PRGL. The segment at residues 91-150 is a DNA-binding region (homeobox); it reads APRVRTAFTMEQVRTLEGVFQHHQYLSPLERKRLAREMQLSEVQIKTWFQNRRMKHKRQM.

Expressed in bone marrow of patients recovering from chemotherapy. Also expressed in an erythroleukemia cell line.

The protein localises to the nucleus. In terms of biological role, may be involved in ventralization. The protein is Homeobox protein VENTX (VENTX) of Homo sapiens (Human).